The sequence spans 813 residues: Leucine--tRNA ligase (813 aa).

A 'HIGH' region motif is present at residues 39–49; sequence PYPSGRIHMGH. Residues 582-586 carry the 'KMSKS' region motif; that stretch reads KMSKS. Position 585 (lysine 585) interacts with ATP.

This sequence belongs to the class-I aminoacyl-tRNA synthetase family.

The protein localises to the cytoplasm. The catalysed reaction is tRNA(Leu) + L-leucine + ATP = L-leucyl-tRNA(Leu) + AMP + diphosphate. This is Leucine--tRNA ligase from Campylobacter hominis (strain ATCC BAA-381 / DSM 21671 / CCUG 45161 / LMG 19568 / NCTC 13146 / CH001A).